Consider the following 607-residue polypeptide: MRTIKFFFAVAIATVAKAQWGGGGASAGQRLTVGNGQTQHKGVADGYSYEIWLDNTGGSGSMTLGSGATFKAEWNASVNRGNFLARRGLDFGSQKKATDYSYIGLDYTATYRQTGSASGNSRLCVYGWFQNRGVQGVPLVEYYIIEDWVDWVSDAQGRMVTIDGAQYKIFQMDHTGPTINGGSETFKQYFSVRQQKRTSGHITVSDHFKEWAKQGWGIGNLYEVALNAEGWQSSGIADVTKLDVYTTQKGSNPAPTSTGTVPSSSAGGSTANGKKFTVGNGQNQHKGVNDGFSYEIWLDNTGGNGSMTLGSGATFKAEWNAAVNRGNFLARRGLDFGSQKKATDYDYIGLDYAATYKQTASASGNSRLCVYGWFQNRGLNGVPLVEYYIIEDWVDWVPDAQGKMVTIDGAQYKIFQMDHTGPTINGGSETFKQYFSVRQQKRTSGHITVSDHFKEWAKQGWGIGNLYEVALNAEGWQSSGVADVTLLDVYTTPKGSSPATSAAPRTTTRTTTRTKSLPTNYNKCSARITAQGYKCCSDPNCVVYYTDEDGTWGVENNDWCGCGVEQCSSKITSQGYKCCSDPNCVVFYTDDDGKWGVENNDWCGCGF.

The first 18 residues, 1–18, serve as a signal peptide directing secretion; the sequence is MRTIKFFFAVAIATVAKA. The GH11 1 domain maps to 35 to 242; the sequence is NGQTQHKGVA…SSGIADVTKL (208 aa). The active-site Nucleophile is the Glu-141. Residue Glu-223 is the Proton donor of the active site. Over residues 248–272 the composition is skewed to polar residues; that stretch reads QKGSNPAPTSTGTVPSSSAGGSTAN. The interval 248–284 is disordered; it reads QKGSNPAPTSTGTVPSSSAGGSTANGKKFTVGNGQNQ. Residues 280–487 form the GH11 2 domain; it reads NGQNQHKGVN…SSGVADVTLL (208 aa). Glu-386 acts as the Nucleophile in catalysis. Glu-474 serves as the catalytic Proton donor. Residues 493-514 are disordered; the sequence is PKGSSPATSAAPRTTTRTTTRT. A compositionally biased stretch (low complexity) spans 496-514; it reads SSPATSAAPRTTTRTTTRT. CBM10 domains follow at residues 523–563 and 566–606; these read KCSA…CGCG and QCSS…CGCG.

This sequence belongs to the glycosyl hydrolase 11 (cellulase G) family.

It carries out the reaction Endohydrolysis of (1-&gt;4)-beta-D-xylosidic linkages in xylans.. It participates in glycan degradation; xylan degradation. Hydrolyzes xylans into xylobiose and xylose. This is Bifunctional endo-1,4-beta-xylanase A (XYNA) from Neocallimastix patriciarum (Rumen fungus).